Here is an 84-residue protein sequence, read N- to C-terminus: RNA-binding protein SAHV_0542 (84 aa).

It belongs to the eukaryotic ribosomal protein eL8 family.

This chain is RNA-binding protein SAHV_0542, found in Staphylococcus aureus (strain Mu3 / ATCC 700698).